Reading from the N-terminus, the 117-residue chain is UPF0344 protein GTNG_0604 (117 aa).

Helical transmembrane passes span 1–21 (MTHA…IAVS), 39–59 (LFYI…ASIS), 61–81 (LYWL…MVLV), and 97–117 (VIAL…FDLF).

It belongs to the UPF0344 family.

Its subcellular location is the cell membrane. This chain is UPF0344 protein GTNG_0604, found in Geobacillus thermodenitrificans (strain NG80-2).